Here is a 430-residue protein sequence, read N- to C-terminus: Serine--tRNA ligase (430 aa).

236 to 238 (TAE) serves as a coordination point for L-serine. 267–269 (RSE) is an ATP binding site. L-serine is bound at residue glutamate 290. Residue 354-357 (EISS) coordinates ATP. L-serine is bound at residue serine 390.

It belongs to the class-II aminoacyl-tRNA synthetase family. Type-1 seryl-tRNA synthetase subfamily. Homodimer. The tRNA molecule binds across the dimer.

Its subcellular location is the cytoplasm. The catalysed reaction is tRNA(Ser) + L-serine + ATP = L-seryl-tRNA(Ser) + AMP + diphosphate + H(+). The enzyme catalyses tRNA(Sec) + L-serine + ATP = L-seryl-tRNA(Sec) + AMP + diphosphate + H(+). It functions in the pathway aminoacyl-tRNA biosynthesis; selenocysteinyl-tRNA(Sec) biosynthesis; L-seryl-tRNA(Sec) from L-serine and tRNA(Sec): step 1/1. In terms of biological role, catalyzes the attachment of serine to tRNA(Ser). Is also able to aminoacylate tRNA(Sec) with serine, to form the misacylated tRNA L-seryl-tRNA(Sec), which will be further converted into selenocysteinyl-tRNA(Sec). The polypeptide is Serine--tRNA ligase (Mannheimia succiniciproducens (strain KCTC 0769BP / MBEL55E)).